The chain runs to 487 residues: Transmembrane protein 161B (487 aa).

A glycan (N-linked (GlcNAc...) asparagine) is linked at N34. A helical membrane pass occupies residues 107 to 127 (LVDFTVAATVVYLVTEVYYNF). An N-linked (GlcNAc...) asparagine glycan is attached at N135. The next 2 membrane-spanning stretches (helical) occupy residues 136–156 (ISLV…FSLT) and 169–189 (SVCV…LIVT). An N-linked (GlcNAc...) asparagine glycan is attached at N203. The next 5 membrane-spanning stretches (helical) occupy residues 228-248 (FKFF…FPGL), 265-285 (ITQT…LLWV), 305-325 (LMTE…LCAL), 367-387 (VFYY…MLLH), and 459-479 (LSFL…FGLF).

It belongs to the TMEM161 family.

The protein resides in the cell membrane. In terms of biological role, essential for maintaining normal cardiac rhythm in the developing heart and for neonatal survival. Inhibits potassium and calcium currents in the cardiomyocytes, this assists in timely action potential repolarization and thereby maintains normal cardiac rhythm. The protein is Transmembrane protein 161B (TMEM161B) of Homo sapiens (Human).